A 153-amino-acid polypeptide reads, in one-letter code: MGLTSQLLPPLFFLLACAGNFAHGHNCHIALREIIETLNSLTEQKTLCTKLTITDILAASKNTTEKETFCRAATVLRQFYSHHEKDTRCLGASAQQFHRHKQLIRFLKRLDRNLWGLAGLNSCPVKEASQSTLEDFLERLKTIMREKYSKCSS.

The signal sequence occupies residues 1-24 (MGLTSQLLPPLFFLLACAGNFAHG). Cystine bridges form between Cys27–Cys151, Cys48–Cys89, and Cys70–Cys123. The N-linked (GlcNAc...) asparagine glycan is linked to Asn62.

It belongs to the IL-4/IL-13 family.

The protein localises to the secreted. In terms of biological role, participates in at least several B-cell activation processes as well as of other cell types. It is a costimulator of DNA-synthesis. It induces the expression of class II MHC molecules on resting B-cells. It enhances both secretion and cell surface expression of IgE and IgG1. It also regulates the expression of the low affinity Fc receptor for IgE (CD23) on both lymphocytes and monocytes. Positively regulates IL31RA expression in macrophages. Stimulates autophagy in dendritic cells by interfering with mTORC1 signaling and through the induction of RUFY4. This chain is Interleukin-4 (IL4), found in Cercocebus atys (Sooty mangabey).